A 239-amino-acid polypeptide reads, in one-letter code: Pyridoxine 5'-phosphate synthase (239 aa).

Asn7 serves as a coordination point for 3-amino-2-oxopropyl phosphate. 1-deoxy-D-xylulose 5-phosphate is bound at residue 9-10; sequence DH. Arg18 contributes to the 3-amino-2-oxopropyl phosphate binding site. His43 acts as the Proton acceptor in catalysis. 2 residues coordinate 1-deoxy-D-xylulose 5-phosphate: Arg45 and His50. Glu70 acts as the Proton acceptor in catalysis. Thr100 serves as a coordination point for 1-deoxy-D-xylulose 5-phosphate. His192 functions as the Proton donor in the catalytic mechanism. Residues Gly193 and 214 to 215 contribute to the 3-amino-2-oxopropyl phosphate site; that span reads GH.

Belongs to the PNP synthase family. As to quaternary structure, homooctamer; tetramer of dimers.

The protein localises to the cytoplasm. The catalysed reaction is 3-amino-2-oxopropyl phosphate + 1-deoxy-D-xylulose 5-phosphate = pyridoxine 5'-phosphate + phosphate + 2 H2O + H(+). It functions in the pathway cofactor biosynthesis; pyridoxine 5'-phosphate biosynthesis; pyridoxine 5'-phosphate from D-erythrose 4-phosphate: step 5/5. Its function is as follows. Catalyzes the complicated ring closure reaction between the two acyclic compounds 1-deoxy-D-xylulose-5-phosphate (DXP) and 3-amino-2-oxopropyl phosphate (1-amino-acetone-3-phosphate or AAP) to form pyridoxine 5'-phosphate (PNP) and inorganic phosphate. This Pelagibacter ubique (strain HTCC1062) protein is Pyridoxine 5'-phosphate synthase.